The primary structure comprises 238 residues: Uridylate kinase (238 aa).

Residue 12–15 participates in ATP binding; sequence KLSG. Gly-54 contributes to the UMP binding site. ATP contacts are provided by Gly-55 and Arg-59. UMP contacts are provided by residues Asp-74 and 135–142; that span reads TGNPYFTT. ATP contacts are provided by Thr-162, Asn-163, Tyr-168, and Asp-171.

The protein belongs to the UMP kinase family. Homohexamer.

The protein resides in the cytoplasm. It carries out the reaction UMP + ATP = UDP + ADP. Its pathway is pyrimidine metabolism; CTP biosynthesis via de novo pathway; UDP from UMP (UMPK route): step 1/1. Inhibited by UTP. Its function is as follows. Catalyzes the reversible phosphorylation of UMP to UDP. This chain is Uridylate kinase, found in Rhodopseudomonas palustris (strain ATCC BAA-98 / CGA009).